We begin with the raw amino-acid sequence, 26 residues long: Oxyopinin-3a (26 aa).

As to expression, expressed by the venom gland.

Its subcellular location is the secreted. Functionally, may have cytolytic and antimicrobial activity. The polypeptide is Oxyopinin-3a (Oxyopes takobius (Lynx spider)).